Consider the following 244-residue polypeptide: Heat shock transcription factor (244 aa).

Residues 13-108 (IPKFIMKLYK…LLGFDDSLRM (96 aa)) mediate DNA binding. Residues 123–168 (DGSLKEIVEYLYVQNQELYTELSVCKERIERQERALNGLIEILSRV) form an involved in trimerization region. A disordered region spans residues 204–244 (EGCEPASPPLQDKGIPELSFKPGGIPHADSDTKDDNYDPFF). A compositionally biased stretch (basic and acidic residues) spans 231 to 244 (ADSDTKDDNYDPFF).

This sequence belongs to the HSF family. Homotrimer. Homotrimerization increases the affinity of HSF1 to DNA.

It localises to the nucleus. Functionally, DNA-binding transcription factor that specifically binds heat shock promoter elements (HSE) and activates transcription. The polypeptide is Heat shock transcription factor (Encephalitozoon cuniculi (strain GB-M1) (Microsporidian parasite)).